Here is a 371-residue protein sequence, read N- to C-terminus: DNA replication and repair protein RecF (371 aa).

ATP is bound at residue 30-37 (GSNGQGKT).

This sequence belongs to the RecF family.

Its subcellular location is the cytoplasm. Its function is as follows. The RecF protein is involved in DNA metabolism; it is required for DNA replication and normal SOS inducibility. RecF binds preferentially to single-stranded, linear DNA. It also seems to bind ATP. The protein is DNA replication and repair protein RecF of Acidothermus cellulolyticus (strain ATCC 43068 / DSM 8971 / 11B).